The chain runs to 718 residues: D-(-)-3-hydroxybutyrate oligomer hydrolase (718 aa).

The Charge relay system role is filled by Ser320.

This sequence belongs to the D-(-)-3-hydroxybutyrate oligomer hydrolase family.

The protein localises to the cytoplasm. The enzyme catalyses (3R)-hydroxybutanoate dimer + H2O = 2 (R)-3-hydroxybutanoate + H(+). It functions in the pathway lipid metabolism; butanoate metabolism. Its activity is regulated as follows. Inhibited by diisopropylfluorophosphate (DFP). In terms of biological role, participates in the degradation of poly-3-hydroxybutyrate (PHB). It works downstream of poly(3-hydroxybutyrate) depolymerase, hydrolyzing D(-)-3-hydroxybutyrate oligomers of various length (3HB-oligomers) into 3HB-monomers. Seems to have also poly(3-hydroxybutyrate) depolymerase activity since it is able to release 3HB-monomers from artificial amorphous PHB. The protein is D-(-)-3-hydroxybutyrate oligomer hydrolase (phaZ2) of Cupriavidus necator (strain ATCC 17699 / DSM 428 / KCTC 22496 / NCIMB 10442 / H16 / Stanier 337) (Ralstonia eutropha).